Here is a 440-residue protein sequence, read N- to C-terminus: Light-independent protochlorophyllide reductase subunit N (440 aa).

The [4Fe-4S] cluster site is built by Cys-15, Cys-40, and Cys-99.

It belongs to the BchN/ChlN family. In terms of assembly, protochlorophyllide reductase is composed of three subunits; BchL, BchN and BchB. Forms a heterotetramer of two BchB and two BchN subunits. The cofactor is [4Fe-4S] cluster.

The catalysed reaction is chlorophyllide a + oxidized 2[4Fe-4S]-[ferredoxin] + 2 ADP + 2 phosphate = protochlorophyllide a + reduced 2[4Fe-4S]-[ferredoxin] + 2 ATP + 2 H2O. It participates in porphyrin-containing compound metabolism; bacteriochlorophyll biosynthesis (light-independent). Functionally, component of the dark-operative protochlorophyllide reductase (DPOR) that uses Mg-ATP and reduced ferredoxin to reduce ring D of protochlorophyllide (Pchlide) to form chlorophyllide a (Chlide). This reaction is light-independent. The NB-protein (BchN-BchB) is the catalytic component of the complex. This chain is Light-independent protochlorophyllide reductase subunit N, found in Heliobacterium mobile (Heliobacillus mobilis).